The following is an 812-amino-acid chain: Protein let-653 (812 aa).

The first 21 residues, 1–21 (MRHPLISLLLLIAFYSTSSEA), serve as a signal peptide directing secretion. 2 consecutive Apple domains span residues 26 to 116 (CNSF…WKYC) and 123 to 209 (CSGE…ENNC). Disulfide bonds link cysteine 26-cysteine 116, cysteine 53-cysteine 88, cysteine 57-cysteine 72, cysteine 123-cysteine 209, cysteine 154-cysteine 178, and cysteine 158-cysteine 166. N-linked (GlcNAc...) asparagine glycans are attached at residues asparagine 172, asparagine 211, and asparagine 272. Residues 221–725 (ECRDNGISVS…NTCDDVEGCD (505 aa)) enclose the ZP domain. Composition is skewed to low complexity over residues 375 to 449 (QVTT…STTT) and 496 to 584 (PTTT…PASS). 2 disordered regions span residues 375 to 461 (QVTT…STIM) and 494 to 584 (DVPT…PASS). N-linked (GlcNAc...) asparagine glycosylation occurs at asparagine 771.

Cleaved at the C-terminal domain. Expressed in external cuticle-producing epithelial cells including the epidermis, vulva, rectum, excretory duct and excretory pore.

It is found in the apical cell membrane. The protein localises to the secreted. Its subcellular location is the extracellular space. Functionally, required for epithelial tube development and shaping. Involved in the morphogenesis and function of the three unicellular tubes of the excretory system, the canal cell, the duct cell and the pore cell. Also plays a role in cuticle development, alae formation and shaping of the vulval lumen. Required for larval development. In Caenorhabditis elegans, this protein is Protein let-653.